The sequence spans 73 residues: Beta-defensin 50 (73 aa).

A signal peptide spans 1–23 (MKTLCFLLLTSGLLYLMVKGVGS). Cystine bridges form between Cys-34–Cys-63 and Cys-46–Cys-64.

This sequence belongs to the beta-defensin family. In terms of tissue distribution, highly expressed in prostate. Not expressed in uterus, epididymis, ovary, testis, spleen, submaxillary gland, thymus, thyroid, pancreas, smooth muscle, skeletal muscle, heart, kidney, lung, liver, eye and brain.

The protein resides in the secreted. In terms of biological role, has bactericidal activity. This Mus musculus (Mouse) protein is Beta-defensin 50 (Defb50).